Consider the following 302-residue polypeptide: Glutaminase (302 aa).

Substrate is bound by residues Ser-61, Asn-111, Glu-155, Asn-162, Tyr-186, Tyr-238, and Val-256.

This sequence belongs to the glutaminase family. In terms of assembly, homotetramer.

It carries out the reaction L-glutamine + H2O = L-glutamate + NH4(+). The polypeptide is Glutaminase (Pseudomonas aeruginosa (strain ATCC 15692 / DSM 22644 / CIP 104116 / JCM 14847 / LMG 12228 / 1C / PRS 101 / PAO1)).